A 194-amino-acid polypeptide reads, in one-letter code: Large ribosomal subunit protein uL5 (194 aa).

It belongs to the universal ribosomal protein uL5 family. In terms of assembly, part of the 50S ribosomal subunit; part of the 5S rRNA/L5/L18/L25 subcomplex. Contacts the 5S rRNA and the P site tRNA. Forms a bridge to the 30S subunit in the 70S ribosome.

Its function is as follows. This is one of the proteins that bind and probably mediate the attachment of the 5S RNA into the large ribosomal subunit, where it forms part of the central protuberance. In the 70S ribosome it contacts protein S13 of the 30S subunit (bridge B1b), connecting the 2 subunits; this bridge is implicated in subunit movement. Contacts the P site tRNA; the 5S rRNA and some of its associated proteins might help stabilize positioning of ribosome-bound tRNAs. The polypeptide is Large ribosomal subunit protein uL5 (Frankia alni (strain DSM 45986 / CECT 9034 / ACN14a)).